Consider the following 778-residue polypeptide: Lon protease (778 aa).

Positions 6–207 constitute a Lon N-terminal domain; the sequence is LPLMALRDMV…TVISTLTSNI (202 aa). ATP is bound at residue 356 to 363; it reads GPPGVGKT. In terms of domain architecture, Lon proteolytic spans 592–773; it reads EDQIGSTTGL…DQVLKHALVE (182 aa). Catalysis depends on residues S679 and K722.

The protein belongs to the peptidase S16 family. In terms of assembly, homohexamer. Organized in a ring with a central cavity.

The protein localises to the cytoplasm. It catalyses the reaction Hydrolysis of proteins in presence of ATP.. In terms of biological role, ATP-dependent serine protease that mediates the selective degradation of mutant and abnormal proteins as well as certain short-lived regulatory proteins. Required for cellular homeostasis and for survival from DNA damage and developmental changes induced by stress. Degrades polypeptides processively to yield small peptide fragments that are 5 to 10 amino acids long. Binds to DNA in a double-stranded, site-specific manner. In Rickettsia felis (strain ATCC VR-1525 / URRWXCal2) (Rickettsia azadi), this protein is Lon protease.